The sequence spans 320 residues: ATP-dependent 6-phosphofructokinase (320 aa).

ATP is bound at residue G12. R22–R26 is an ADP binding site. ATP contacts are provided by residues R73–F74 and G103–S106. Mg(2+) is bound at residue D104. A substrate-binding site is contributed by T126 to D128. The Proton acceptor role is filled by D128. R155 is an ADP binding site. Substrate contacts are provided by residues R163 and M170–R172. Residues G186–E188, K212, and K214–H216 contribute to the ADP site. Residues E223, R244, and H250–R253 each bind substrate.

The protein belongs to the phosphofructokinase type A (PFKA) family. ATP-dependent PFK group I subfamily. Prokaryotic clade 'B1' sub-subfamily. Homotetramer. The cofactor is Mg(2+).

It is found in the cytoplasm. The enzyme catalyses beta-D-fructose 6-phosphate + ATP = beta-D-fructose 1,6-bisphosphate + ADP + H(+). The protein operates within carbohydrate degradation; glycolysis; D-glyceraldehyde 3-phosphate and glycerone phosphate from D-glucose: step 3/4. With respect to regulation, allosterically activated by ADP and other diphosphonucleosides, and allosterically inhibited by phosphoenolpyruvate. Its function is as follows. Catalyzes the phosphorylation of D-fructose 6-phosphate to fructose 1,6-bisphosphate by ATP, the first committing step of glycolysis. This is ATP-dependent 6-phosphofructokinase from Aliivibrio fischeri (strain ATCC 700601 / ES114) (Vibrio fischeri).